A 108-amino-acid chain; its full sequence is Latartoxin-2c (108 aa).

Positions 1-19 are cleaved as a signal peptide; sequence MKVLVITALCFILLQNVLG. A propeptide spans 20–42 (removed in mature form); it reads EDTYEDLQNYIENLINENQDEAR. The short motif at 39–42 is the Processing quadruplet motif element; the sequence is DEAR. Cystine bridges form between Cys44/Cys61, Cys51/Cys72, Cys60/Cys84, and Cys74/Cys82. Ile107 carries the isoleucine amide modification.

The protein belongs to the neurotoxin 19 (CSTX) family. 11 (latartoxin) subfamily. Post-translationally, contains 4 disulfide bonds. Cleavage of the propeptide depends on the processing quadruplet motif (XXXR, with at least one of X being E). As to expression, expressed by the venom gland.

It localises to the secreted. Its function is as follows. Insect toxin. The chain is Latartoxin-2c from Lachesana tarabaevi (Spider).